The following is a 716-amino-acid chain: Eosinophil peroxidase (716 aa).

Positions 1–18 are cleaved as a signal peptide; it reads MMQQLLALVGALATLILT. A propeptide spanning residues 19 to 140 is cleaved from the precursor; it reads QHAEGTAPAS…SGCALQDQAE (122 aa). Asn-53 and Asn-114 each carry an N-linked (GlcNAc...) asparagine glycan. Cys-142 and Cys-153 are oxidised to a cystine. Asp-233 is a binding site for heme b. His-234 serves as the catalytic Proton acceptor. Ca(2+) is bound at residue Asp-235. 2 cysteine pairs are disulfide-bonded: Cys-254–Cys-264 and Cys-258–Cys-282. 4 residues coordinate Ca(2+): Thr-307, Phe-309, Asp-311, and Ser-313. N-linked (GlcNAc...) asparagine glycosylation is found at Asn-328 and Asn-364. Cys-360 and Cys-371 are disulfide-bonded. Residues Glu-381 and His-475 each coordinate heme b. Tyr-489 is subject to 3'-nitrotyrosine. Intrachain disulfides connect Cys-579–Cys-636 and Cys-677–Cys-702. An N-linked (GlcNAc...) asparagine glycan is attached at Asn-709.

Belongs to the peroxidase family. XPO subfamily. As to quaternary structure, tetramer of two light chains and two heavy chains. Ca(2+) serves as cofactor. It depends on heme b as a cofactor.

The protein localises to the cytoplasmic granule. The enzyme catalyses 2 a phenolic donor + H2O2 = 2 a phenolic radical donor + 2 H2O. Functionally, mediates tyrosine nitration of secondary granule proteins in mature resting eosinophils. The protein is Eosinophil peroxidase (Epx) of Mus musculus (Mouse).